Here is a 217-residue protein sequence, read N- to C-terminus: ATP phosphoribosyltransferase (217 aa).

The protein belongs to the ATP phosphoribosyltransferase family. Short subfamily. Heteromultimer composed of HisG and HisZ subunits.

The protein resides in the cytoplasm. The enzyme catalyses 1-(5-phospho-beta-D-ribosyl)-ATP + diphosphate = 5-phospho-alpha-D-ribose 1-diphosphate + ATP. It functions in the pathway amino-acid biosynthesis; L-histidine biosynthesis; L-histidine from 5-phospho-alpha-D-ribose 1-diphosphate: step 1/9. Its function is as follows. Catalyzes the condensation of ATP and 5-phosphoribose 1-diphosphate to form N'-(5'-phosphoribosyl)-ATP (PR-ATP). Has a crucial role in the pathway because the rate of histidine biosynthesis seems to be controlled primarily by regulation of HisG enzymatic activity. This chain is ATP phosphoribosyltransferase, found in Polaromonas naphthalenivorans (strain CJ2).